The primary structure comprises 289 residues: Thioredoxin-like protein 1 (289 aa).

The Thioredoxin domain maps to 2–109; that stretch reads VGVKPVGSDP…EEKIKQHLEN (108 aa). Cys-34 and Cys-37 are disulfide-bonded. Ser-113 carries the post-translational modification Phosphoserine. The 171-residue stretch at 115–285 folds into the PITH domain; the sequence is EDADIPKGYM…NDFKRVVGKK (171 aa).

As to quaternary structure, component of the 19S regulatory cap of the 26S proteasome. Interacts with PSMD14/RPN11. Interacts with, and reduces EEF1A1.

It is found in the cytoplasm. The protein resides in the nucleus. In terms of biological role, active thioredoxin with a redox potential of about -250 mV. This chain is Thioredoxin-like protein 1 (Txnl1), found in Mus musculus (Mouse).